A 217-amino-acid chain; its full sequence is Octanoyltransferase (217 aa).

Residues 32–207 enclose the BPL/LPL catalytic domain; sequence SESPDELWIV…TFSQLLGYQH (176 aa). Substrate is bound by residues 71 to 78, 138 to 140, and 151 to 153; these read RGGQVTYH, SLG, and GLA. The active-site Acyl-thioester intermediate is Cys169.

This sequence belongs to the LipB family.

The protein localises to the cytoplasm. The catalysed reaction is octanoyl-[ACP] + L-lysyl-[protein] = N(6)-octanoyl-L-lysyl-[protein] + holo-[ACP] + H(+). It participates in protein modification; protein lipoylation via endogenous pathway; protein N(6)-(lipoyl)lysine from octanoyl-[acyl-carrier-protein]: step 1/2. Functionally, catalyzes the transfer of endogenously produced octanoic acid from octanoyl-acyl-carrier-protein onto the lipoyl domains of lipoate-dependent enzymes. Lipoyl-ACP can also act as a substrate although octanoyl-ACP is likely to be the physiological substrate. The chain is Octanoyltransferase from Shewanella sp. (strain W3-18-1).